Consider the following 107-residue polypeptide: U1-lycotoxin-Ls1b (107 aa).

A signal peptide spans 1 to 20 (MMKVLVVVALLVTLISYSSS). A propeptide spanning residues 21–41 (EGIDDLEADELLSLMANEQTR) is cleaved from the precursor. 4 disulfide bridges follow: Cys44–Cys59, Cys51–Cys68, Cys58–Cys86, and Cys70–Cys84.

Belongs to the neurotoxin 19 (CSTX) family. 04 (U1-Lctx) subfamily. As to expression, expressed by the venom gland.

The protein localises to the secreted. This Lycosa singoriensis (Wolf spider) protein is U1-lycotoxin-Ls1b.